Consider the following 674-residue polypeptide: Slender lobes-like protein (674 aa).

3 disordered regions span residues 65 to 137 (LEKS…NASK), 168 to 321 (NELN…TIKK), and 352 to 382 (QKSRRQSLHVPSPELAAKNPKLRRRSERVEV). The span at 73–97 (PKKKVQTKKHLPPVRKKDSVKRRRI) shows a compositional bias: basic residues. The segment covering 127-137 (NQSNCSSNASK) has biased composition (polar residues). Residues 216 to 228 (VDSDDEEEQDQDQ) show a composition bias toward acidic residues. Positions 233–245 (KPAESENHSEIKK) are enriched in basic and acidic residues. Ser-248 carries the phosphoserine modification. Residues 272–312 (EDPKEAGKNEESDKDKPAENGKSDKDKQAETEMSDEDKPSE) are compositionally biased toward basic and acidic residues. 2 positions are modified to phosphoserine: Ser-358 and Ser-391. Disordered regions lie at residues 395-585 (MVAE…AGYV) and 618-659 (KYFR…NSAK). Basic residues predominate over residues 400-410 (KRQKNKRKRLS). Residue Ser-414 is modified to Phosphoserine. Basic residues predominate over residues 548–558 (AKQKKKGKKKQ).

The protein is Slender lobes-like protein of Drosophila melanogaster (Fruit fly).